We begin with the raw amino-acid sequence, 352 residues long: Phosphoribosylformylglycinamidine cyclo-ligase (352 aa).

The protein belongs to the AIR synthase family.

The protein resides in the cytoplasm. The enzyme catalyses 2-formamido-N(1)-(5-O-phospho-beta-D-ribosyl)acetamidine + ATP = 5-amino-1-(5-phospho-beta-D-ribosyl)imidazole + ADP + phosphate + H(+). It participates in purine metabolism; IMP biosynthesis via de novo pathway; 5-amino-1-(5-phospho-D-ribosyl)imidazole from N(2)-formyl-N(1)-(5-phospho-D-ribosyl)glycinamide: step 2/2. In Hahella chejuensis (strain KCTC 2396), this protein is Phosphoribosylformylglycinamidine cyclo-ligase.